The chain runs to 93 residues: Small integral membrane protein 36 (93 aa).

Residues 14–34 (LIILVASYVILLLVFLVSCVL) traverse the membrane as a helical segment. A disordered region spans residues 70 to 93 (SHWARGPSLHLKDPAPLGKKSTVV).

It localises to the membrane. This Mus musculus (Mouse) protein is Small integral membrane protein 36.